The following is a 342-amino-acid chain: Methionyl-tRNA formyltransferase (342 aa).

108 to 111 is a binding site for (6S)-5,6,7,8-tetrahydrofolate; the sequence is SLLP.

The protein belongs to the Fmt family.

It carries out the reaction L-methionyl-tRNA(fMet) + (6R)-10-formyltetrahydrofolate = N-formyl-L-methionyl-tRNA(fMet) + (6S)-5,6,7,8-tetrahydrofolate + H(+). Attaches a formyl group to the free amino group of methionyl-tRNA(fMet). The formyl group appears to play a dual role in the initiator identity of N-formylmethionyl-tRNA by promoting its recognition by IF2 and preventing the misappropriation of this tRNA by the elongation apparatus. This chain is Methionyl-tRNA formyltransferase, found in Prochlorococcus marinus (strain MIT 9303).